The sequence spans 260 residues: Hydroxyacylglutathione hydrolase (260 aa).

7 residues coordinate Zn(2+): His61, His63, Asp65, His66, His119, Asp138, and His176.

Belongs to the metallo-beta-lactamase superfamily. Glyoxalase II family. In terms of assembly, monomer. Requires Zn(2+) as cofactor.

It carries out the reaction an S-(2-hydroxyacyl)glutathione + H2O = a 2-hydroxy carboxylate + glutathione + H(+). The protein operates within secondary metabolite metabolism; methylglyoxal degradation; (R)-lactate from methylglyoxal: step 2/2. Functionally, thiolesterase that catalyzes the hydrolysis of S-D-lactoyl-glutathione to form glutathione and D-lactic acid. The protein is Hydroxyacylglutathione hydrolase of Brucella suis (strain ATCC 23445 / NCTC 10510).